A 429-amino-acid chain; its full sequence is Probable beta-1,3-galactosyl-O-glycosyl-glycoprotein beta-1,6-N-acetylglucosaminyltransferase 7 (429 aa).

Over Met-1–Lys-8 the chain is Cytoplasmic. Residues Pro-9–Leu-25 form a helical; Signal-anchor for type II membrane protein membrane-spanning segment. At Arg-26–Pro-429 the chain is on the extracellular side. Cystine bridges form between Cys-53/Cys-205, Cys-139/Cys-354, Cys-160/Cys-187, and Cys-363/Cys-394. Residue Asn-87 is glycosylated (N-linked (GlcNAc...) asparagine). N-linked (GlcNAc...) asparagine glycosylation is present at Asn-272.

This sequence belongs to the glycosyltransferase 14 family.

It is found in the golgi apparatus membrane. Its pathway is protein modification; protein glycosylation. Probable glycosyltransferase. The protein is Probable beta-1,3-galactosyl-O-glycosyl-glycoprotein beta-1,6-N-acetylglucosaminyltransferase 7 of Sus scrofa (Pig).